The chain runs to 151 residues: Protein Turandot Z (151 aa).

The N-terminal stretch at 1-23 is a signal peptide; that stretch reads MSRLIHLSFVLALLACLTGPISA.

This sequence belongs to the Turandot family.

Its subcellular location is the secreted. In terms of biological role, a humoral factor that may play a role in stress tolerance. In Drosophila pseudoobscura pseudoobscura (Fruit fly), this protein is Protein Turandot Z.